The sequence spans 535 residues: MTKYIFVTGGVVSSLGKGITAASLGRLLKNRGLNVTIQKFDPYINVDPGTMSPYQHGEVFVTDDGAETDLDLGHYERFIDINLNKYSNVTTGKIYSSVLQKERRGEYLGGTVQVIPHITNEIKERVYRSGRETNADVVITEIGGTVGDIESLPFLEAIRQIKSDIGRDNVMYIHCTLIPYLKAAGEMKTKPTQHSVKELRSLGIQPNIIVVRTEMPVSQDMKDKLALFCDIDTKAVIEARDADTLYAVPLSLQEQNMDQIVCDHLKLDNPAADMTEWTALVEKVRNLSKKTKIALVGKYVELQDAYISVVEALRHAGYSFDTDVEVKWVNAEHVTAENVQELVGDTDGILVPGGFGDRGVEGKIVAIQYARENKVPFLGICLGMQLASIEFARNVLGLEGANSSEINPDTPYAIIDLLPEQKDVEDLGGTLRLGLYPCKLAEETNAYNAYNEPVVYERHRHRYEFNNQFRPDMEKAGFVFSGTSPDGRLVEIVELKDHPWFVAAQFHPELVSRPNRPQPLFHDFVRASITNKESK.

Residues 1–267 (MTKYIFVTGG…DQIVCDHLKL (267 aa)) form an amidoligase domain region. Residue Ser13 participates in CTP binding. Ser13 provides a ligand contact to UTP. An ATP-binding site is contributed by 14–19 (SLGKGI). Tyr54 contributes to the L-glutamine binding site. Position 71 (Asp71) interacts with ATP. Mg(2+) is bound by residues Asp71 and Glu141. CTP is bound by residues 148 to 150 (DIE), 188 to 193 (KTKPTQ), and Lys224. Residues 188-193 (KTKPTQ) and Lys224 contribute to the UTP site. 240–242 (RDA) lines the ATP pocket. The Glutamine amidotransferase type-1 domain maps to 292-534 (KIALVGKYVE…VRASITNKES (243 aa)). Residue Gly354 participates in L-glutamine binding. The active-site Nucleophile; for glutamine hydrolysis is the Cys381. L-glutamine contacts are provided by residues 382 to 385 (LGMQ), Glu405, and Arg462. Catalysis depends on residues His507 and Glu509.

The protein belongs to the CTP synthase family. Homotetramer.

The enzyme catalyses UTP + L-glutamine + ATP + H2O = CTP + L-glutamate + ADP + phosphate + 2 H(+). It carries out the reaction L-glutamine + H2O = L-glutamate + NH4(+). The catalysed reaction is UTP + NH4(+) + ATP = CTP + ADP + phosphate + 2 H(+). It participates in pyrimidine metabolism; CTP biosynthesis via de novo pathway; CTP from UDP: step 2/2. Allosterically activated by GTP, when glutamine is the substrate; GTP has no effect on the reaction when ammonia is the substrate. The allosteric effector GTP functions by stabilizing the protein conformation that binds the tetrahedral intermediate(s) formed during glutamine hydrolysis. Inhibited by the product CTP, via allosteric rather than competitive inhibition. Its function is as follows. Catalyzes the ATP-dependent amination of UTP to CTP with either L-glutamine or ammonia as the source of nitrogen. Regulates intracellular CTP levels through interactions with the four ribonucleotide triphosphates. The chain is CTP synthase from Bacillus cereus (strain ATCC 10987 / NRS 248).